A 150-amino-acid polypeptide reads, in one-letter code: Ribosome maturation factor RimP (150 aa).

It belongs to the RimP family.

The protein resides in the cytoplasm. In terms of biological role, required for maturation of 30S ribosomal subunits. This chain is Ribosome maturation factor RimP, found in Francisella tularensis subsp. holarctica (strain LVS).